Consider the following 257-residue polypeptide: Spindlin-2C (257 aa).

Residues 1 to 47 (MKTPHKKGAAKEQMGEGVGHHIGSTTIKKKKASQKRQRSRSSSRRSI) are disordered. Residues 27-43 (IKKKKASQKRQRSRSSS) are compositionally biased toward basic residues. Tudor-like domain regions lie at residues 48-97 (VGCR…LELH), 127-176 (IGKA…YQLL), and 208-253 (IGKH…YDLV). Histone H3K4me3 and H3R8me2a binding regions lie at residues glutamate 136 and 244–246 (DFH).

The protein belongs to the SPIN/STSY family. As to quaternary structure, interacts with C11orf84/SPINDOC.

The protein localises to the nucleus. Its function is as follows. May be involved in the regulation of cell cycle progression. Exhibits H3K4me3-binding activity. The protein is Spindlin-2C (Spin2c) of Mus musculus (Mouse).